A 929-amino-acid chain; its full sequence is MNPYQRASPRTASPASNLQTNPTRTNNPRHSADRNSYFDNPPYNDRGSEDGEDDMASRGDHMAETDQRQYQKINQVIQNFFTKSALSIVSSRVILPTSFNKNGDIRQNKWFNVILDDSDELQLRLTEWKTMDAMAGQHPPLYIEVYLDISGLGHKQSLVVHDEDGKRWDVAAALNAAQPTSRASSRPARPTQIVIERWKIYVGDIDSVHPSDLTEPLPNVYKKAVVLFRGLYANLRLLPAFKYNKSMAKQPANHTSLKLNYRILNGASERPQLDTLSLPLCPSTDPITETAHIGSTNSPIGPLCISVEYRDACEFSVEDSESLLSDQFMGLDDTYLEQKPRAAAPVPGSLPVDKLNTQETPDVGQAYGSLSTFHQVGPPTGTSPISALRAARDMPSSSPIETPPQKLPPNHRTAQGSKSSLRSNDTSSFQRRTSVSFQPFKAGSLSSSPAPGPAGPASPSSSLGRPTSAFGRNINIVPNSLNQPRNRTSLNALPQAALRAPSLPNDNAIASSASSSPKPAPITRYSSSFGHRRGKFSTGGSKTEEDALSSGKGSATSSLQRGSDTLNDGEGGSSGEMRSEDDNISDFLKLLEAKKDLKSFNRSDSSTRDATMRKTTAQLGKYQRMRDSHAQLSDSVSSSTMLHRSSSSSSRQLSSVPAMIHGTSISTASSPGKPISPHTPHTPAIPSRLSANSIIEYDQPHRSRNHRSRSRSGRTARGQGPENLEEQSEVEDDAAGIDIPLSPRPWNYQRRSSSVAQQNRNLPEDEPDMFGVRAASLPVEEGDRARDLHRITSTDLTSSGLFAQTESLASASRDNQAPDDGDSRDDLPRASSTSNTPAKRGTYSSNLRGRGGFFSQGSSTTGSTGGTSSTERQSRYNFNSRAANLDDDEPLLFQMSEIGAGGSRRSLEEARGGSSTGSARGRNSPWGGR.

5 disordered regions span residues 1–66, 342–487, 503–581, 600–770, and 808–929; these read MNPY…AETD, AAAP…PRNR, LPND…RSED, FNRS…PDMF, and LASA…WGGR. Over residues 8-29 the composition is skewed to polar residues; that stretch reads SPRTASPASNLQTNPTRTNNPR. Basic and acidic residues predominate over residues 55–66; the sequence is MASRGDHMAETD. Polar residues-rich tracts occupy residues 368–385, 412–437, 476–487, and 551–566; these read GSLSTFHQVGPPTGTSPI, RTAQGSKSSLRSNDTSSFQRRTSVSF, IVPNSLNQPRNR, and GKGSATSSLQRGSDTL. Residues 600–612 show a composition bias toward basic and acidic residues; that stretch reads FNRSDSSTRDATM. A compositionally biased stretch (low complexity) spans 635–656; sequence SVSSSTMLHRSSSSSSRQLSSV. A compositionally biased stretch (basic residues) spans 702 to 714; that stretch reads RSRNHRSRSRSGR. Positions 723-735 are enriched in acidic residues; it reads NLEEQSEVEDDAA. Composition is skewed to polar residues over residues 749 to 761 and 830 to 847; these read QRRSSSVAQQNRN and ASSTSNTPAKRGTYSSNL. Composition is skewed to low complexity over residues 855-871 and 912-929; these read SQGSSTTGSTGGTSSTE and GGSSTGSARGRNSPWGGR.

It belongs to the ATG13 family. Fungi subfamily. In terms of assembly, interacts with ATG1 to form the ATG1-ATG13 kinase complex.

Its subcellular location is the cytoplasm. It localises to the preautophagosomal structure. Its function is as follows. Activates the ATG1 kinase in a nutritional condition dependent manner through the TOR pathway, leading to autophagy. Also involved in cytoplasm to vacuole transport (Cvt) and more specifically in Cvt vesicle formation. Seems to play a role in the switching machinery regulating the conversion between the Cvt pathway and autophagy. Finally, ATG13 is also required for glycogen storage during stationary phase. The protein is Autophagy-related protein 13 (ATG13) of Phaeosphaeria nodorum (strain SN15 / ATCC MYA-4574 / FGSC 10173) (Glume blotch fungus).